A 379-amino-acid chain; its full sequence is Cytochrome b (379 aa).

A run of 4 helical transmembrane segments spans residues 34-54 (FGSL…LLAM), 78-99 (WLIR…YLHI), 114-134 (WNTG…GYVL), and 179-199 (FFAL…IHLT). Residues His-84 and His-98 each coordinate heme b. The heme b site is built by His-183 and His-197. Residue His-202 coordinates a ubiquinone. 4 helical membrane-spanning segments follow: residues 227–247 (LKDI…AFFS), 289–309 (LGGV…PFLH), 321–341 (LSQV…WIGS), and 348–368 (FIII…ILFP).

Belongs to the cytochrome b family. In terms of assembly, the cytochrome bc1 complex contains 11 subunits: 3 respiratory subunits (MT-CYB, CYC1 and UQCRFS1), 2 core proteins (UQCRC1 and UQCRC2) and 6 low-molecular weight proteins (UQCRH/QCR6, UQCRB/QCR7, UQCRQ/QCR8, UQCR10/QCR9, UQCR11/QCR10 and a cleavage product of UQCRFS1). This cytochrome bc1 complex then forms a dimer. It depends on heme b as a cofactor.

It is found in the mitochondrion inner membrane. In terms of biological role, component of the ubiquinol-cytochrome c reductase complex (complex III or cytochrome b-c1 complex) that is part of the mitochondrial respiratory chain. The b-c1 complex mediates electron transfer from ubiquinol to cytochrome c. Contributes to the generation of a proton gradient across the mitochondrial membrane that is then used for ATP synthesis. The protein is Cytochrome b (MT-CYB) of Casuarius bennetti (Dwarf cassowary).